Reading from the N-terminus, the 352-residue chain is Protein YpbB (352 aa).

Interacts with RecS and SSB (ssbA); the 6 C-terminal residues of SSB are required for interaction with YpbB.

It is found in the cytoplasm. The protein resides in the nucleoid. The polypeptide is Protein YpbB (ypbB) (Bacillus subtilis (strain 168)).